The following is a 380-amino-acid chain: Erythronate-4-phosphate dehydrogenase (380 aa).

Residues Ser45 and Thr66 each coordinate substrate. NAD(+) is bound by residues 126–127 (QV), Asp146, Thr174, 205–207 (ASR), and Asp231. The active site involves Arg207. Glu236 is a catalytic residue. His253 (proton donor) is an active-site residue. Position 256 (Gly256) interacts with NAD(+). Position 257 (Tyr257) interacts with substrate.

The protein belongs to the D-isomer specific 2-hydroxyacid dehydrogenase family. PdxB subfamily. Homodimer.

Its subcellular location is the cytoplasm. It carries out the reaction 4-phospho-D-erythronate + NAD(+) = (R)-3-hydroxy-2-oxo-4-phosphooxybutanoate + NADH + H(+). The protein operates within cofactor biosynthesis; pyridoxine 5'-phosphate biosynthesis; pyridoxine 5'-phosphate from D-erythrose 4-phosphate: step 2/5. Its function is as follows. Catalyzes the oxidation of erythronate-4-phosphate to 3-hydroxy-2-oxo-4-phosphonooxybutanoate. This chain is Erythronate-4-phosphate dehydrogenase, found in Pseudomonas syringae pv. tomato (strain ATCC BAA-871 / DC3000).